Here is a 99-residue protein sequence, read N- to C-terminus: A-type ATP synthase subunit F (99 aa).

It belongs to the V-ATPase F subunit family. Has multiple subunits with at least A(3), B(3), C, D, E, F, H, I and proteolipid K(x).

It is found in the cell membrane. Its function is as follows. Component of the A-type ATP synthase that produces ATP from ADP in the presence of a proton gradient across the membrane. The sequence is that of A-type ATP synthase subunit F from Methanococcus vannielii (strain ATCC 35089 / DSM 1224 / JCM 13029 / OCM 148 / SB).